A 310-amino-acid polypeptide reads, in one-letter code: Bis(hydroxyethyl) terephthalate hydrolase (310 aa).

Residues 1–48 constitute a signal peptide (tat-type signal); the sequence is MQQNPHTHAAPGAARPVLRGVRRRLAAVTAAVAAVLVLGTLTGPGAQA. Phe-111 serves as a coordination point for bis(2-hydroxyethyl) terephthalate. Catalysis depends on Ser-179, which acts as the Nucleophile. Bis(2-hydroxyethyl) terephthalate contacts are provided by Met-180 and Trp-204. Catalysis depends on charge relay system residues Asp-225 and His-257. A disulfide bond links Cys-290 and Cys-306.

Belongs to the AB hydrolase superfamily. In terms of processing, predicted to be exported by the Tat system. The position of the signal peptide cleavage has not been experimentally proven.

The protein resides in the secreted. The enzyme catalyses bis(2-hydroxyethyl) terephthalate + H2O = 4-[(2-hydroxyethoxy)carbonyl]benzoate + ethylene glycol + H(+). Its function is as follows. Catalyzes the degradation of bis(hydroxyethyl) terephthalate (BHET), a derived-oligomer of the plastic poly(ethylene terephthalate) (PET), hydrolyzing BHET to mono(2-hydroxyethyl) terephthalate (MHET). Shows no activity against PET. This Streptomyces coelicolor (strain ATCC BAA-471 / A3(2) / M145) protein is Bis(hydroxyethyl) terephthalate hydrolase.